A 172-amino-acid polypeptide reads, in one-letter code: Disulfide bond formation protein B (172 aa).

Topologically, residues 1-11 (MNPFRWSFRAQ) are cytoplasmic. Residues 12–28 (FLLGFLACAGLLAYAIY) form a helical membrane-spanning segment. The Periplasmic portion of the chain corresponds to 29–46 (VQLHLGLEPCPLCIFQRI). Cysteines 38 and 41 form a disulfide. The chain crosses the membrane as a helical span at residues 47–63 (AFAALAVFFLIGALHGP). Residues 64-70 (RAAGARK) lie on the Cytoplasmic side of the membrane. The chain crosses the membrane as a helical span at residues 71–88 (VYGVLSFIAAGVGMGIGA). Over 89–145 (RHVWVQIRPKDMMSSCGPPLSFLSETMGPFEVFRTVLTGTGDCGNIDWRFLGLSMPM) the chain is Periplasmic. A disulfide bridge connects residues Cys-104 and Cys-131. Residues 146–164 (WSMVWFVGLALWALSAGFK) form a helical membrane-spanning segment. The Cytoplasmic portion of the chain corresponds to 165-172 (ARRSSLHH).

The protein belongs to the DsbB family.

It is found in the cell inner membrane. Functionally, required for disulfide bond formation in some periplasmic proteins. Acts by oxidizing the DsbA protein. This is Disulfide bond formation protein B from Xanthomonas oryzae pv. oryzae (strain MAFF 311018).